The primary structure comprises 196 residues: Crossover junction endodeoxyribonuclease RuvC (196 aa).

Catalysis depends on residues Asp23, Glu83, and His156. Residues Asp23, Glu83, and His156 each coordinate Mg(2+).

It belongs to the RuvC family. As to quaternary structure, homodimer which binds Holliday junction (HJ) DNA. The HJ becomes 2-fold symmetrical on binding to RuvC with unstacked arms; it has a different conformation from HJ DNA in complex with RuvA. In the full resolvosome a probable DNA-RuvA(4)-RuvB(12)-RuvC(2) complex forms which resolves the HJ. Mg(2+) is required as a cofactor.

It is found in the cytoplasm. The catalysed reaction is Endonucleolytic cleavage at a junction such as a reciprocal single-stranded crossover between two homologous DNA duplexes (Holliday junction).. In terms of biological role, the RuvA-RuvB-RuvC complex processes Holliday junction (HJ) DNA during genetic recombination and DNA repair. Endonuclease that resolves HJ intermediates. Cleaves cruciform DNA by making single-stranded nicks across the HJ at symmetrical positions within the homologous arms, yielding a 5'-phosphate and a 3'-hydroxyl group; requires a central core of homology in the junction. The consensus cleavage sequence is 5'-(A/T)TT(C/G)-3'. Cleavage occurs on the 3'-side of the TT dinucleotide at the point of strand exchange. HJ branch migration catalyzed by RuvA-RuvB allows RuvC to scan DNA until it finds its consensus sequence, where it cleaves and resolves the cruciform DNA. The chain is Crossover junction endodeoxyribonuclease RuvC from Treponema pallidum (strain Nichols).